An 880-amino-acid chain; its full sequence is Alanine--tRNA ligase (880 aa).

The Zn(2+) site is built by His565, His569, Cys675, and His679.

The protein belongs to the class-II aminoacyl-tRNA synthetase family. The cofactor is Zn(2+).

It is found in the cytoplasm. It carries out the reaction tRNA(Ala) + L-alanine + ATP = L-alanyl-tRNA(Ala) + AMP + diphosphate. In terms of biological role, catalyzes the attachment of alanine to tRNA(Ala) in a two-step reaction: alanine is first activated by ATP to form Ala-AMP and then transferred to the acceptor end of tRNA(Ala). Also edits incorrectly charged Ser-tRNA(Ala) and Gly-tRNA(Ala) via its editing domain. This chain is Alanine--tRNA ligase, found in Granulibacter bethesdensis (strain ATCC BAA-1260 / CGDNIH1).